The sequence spans 235 residues: Type III pantothenate kinase (235 aa).

6 to 13 (DVGNNYIK) contacts ATP. Substrate-binding positions include Tyr81 and 88–91 (GTDR). The active-site Proton acceptor is Asp90. Asp111 contacts K(+). Thr114 contributes to the ATP binding site. Thr166 lines the substrate pocket.

It belongs to the type III pantothenate kinase family. As to quaternary structure, homodimer. NH4(+) serves as cofactor. The cofactor is K(+).

Its subcellular location is the cytoplasm. It catalyses the reaction (R)-pantothenate + ATP = (R)-4'-phosphopantothenate + ADP + H(+). Its pathway is cofactor biosynthesis; coenzyme A biosynthesis; CoA from (R)-pantothenate: step 1/5. In terms of biological role, catalyzes the phosphorylation of pantothenate (Pan), the first step in CoA biosynthesis. The protein is Type III pantothenate kinase of Cytophaga hutchinsonii (strain ATCC 33406 / DSM 1761 / CIP 103989 / NBRC 15051 / NCIMB 9469 / D465).